The primary structure comprises 273 residues: Shikimate dehydrogenase (NADP(+)) (273 aa).

Residues 18 to 20 (SKS) and T65 each bind shikimate. Catalysis depends on K69, which acts as the Proton acceptor. E81 is an NADP(+) binding site. 2 residues coordinate shikimate: N90 and D105. NADP(+)-binding positions include 130 to 134 (GAGGA), 154 to 159 (NRTHSK), and M217. A shikimate-binding site is contributed by Y219. Position 240 (G240) interacts with NADP(+).

Belongs to the shikimate dehydrogenase family. Homodimer.

The catalysed reaction is shikimate + NADP(+) = 3-dehydroshikimate + NADPH + H(+). It functions in the pathway metabolic intermediate biosynthesis; chorismate biosynthesis; chorismate from D-erythrose 4-phosphate and phosphoenolpyruvate: step 4/7. In terms of biological role, involved in the biosynthesis of the chorismate, which leads to the biosynthesis of aromatic amino acids. Catalyzes the reversible NADPH linked reduction of 3-dehydroshikimate (DHSA) to yield shikimate (SA). This chain is Shikimate dehydrogenase (NADP(+)), found in Janthinobacterium sp. (strain Marseille) (Minibacterium massiliensis).